A 476-amino-acid polypeptide reads, in one-letter code: MGIKFLEFIKPFCAVLPEIQKPERKIQFREKVLWTAITLFIFLVCCQIPLFGIMSSDSADPFYWMRVILASNRGTLMELGIAPIVTSGLIMQLLAGAKIIEVGDTPKDRALFNGAQKLFGMIITIGQAIVYVMTGMYGDPSEMGAGICLLIIIQLFVAGLIVLLLDELLQKGYGLGSGISLFIATNICETIVWKAFGPTTVNTGRGTEFEGAIIALFHLLATRTDKVRALREAFYRQNLPNLMNLIATVFVFAVVIYFQGFRVDLPIKSARYRGQYNTYPIKLFYTSNIPIILQSALVSNLYVISQMLSTRFSGNFLVNLLGTWSDATTSGPARAYPVAGLCYYLSPPESFGSVLDDPVHAVIYIVFMLGSCAFFSKTWIEVSGSSAKDVAKQLKEQQMVMRGHRETSMVHELNRYIPTAAAFGGLCIGGLSVMADFLGAIGSGTGILLAVTIIYQYFEIFVKEQSEVGSMGALLF.

At 2 to 33 (GIKFLEFIKPFCAVLPEIQKPERKIQFREKVL) the chain is on the cytoplasmic side. The helical transmembrane segment at 34–53 (WTAITLFIFLVCCQIPLFGI) threads the bilayer. Over 54 to 76 (MSSDSADPFYWMRVILASNRGTL) the chain is Lumenal. Residues 77–96 (MELGIAPIVTSGLIMQLLAG) traverse the membrane as a helical segment. Residues 97-117 (AKIIEVGDTPKDRALFNGAQK) are Cytoplasmic-facing. The helical transmembrane segment at 118–138 (LFGMIITIGQAIVYVMTGMYG) threads the bilayer. The Lumenal portion of the chain corresponds to 139–144 (DPSEMG). A helical membrane pass occupies residues 145–165 (AGICLLIIIQLFVAGLIVLLL). At 166-172 (DELLQKG) the chain is on the cytoplasmic side. A helical membrane pass occupies residues 173–193 (YGLGSGISLFIATNICETIVW). At 194-240 (KAFGPTTVNTGRGTEFEGAIIALFHLLATRTDKVRALREAFYRQNLP) the chain is on the lumenal side. A helical membrane pass occupies residues 241-261 (NLMNLIATVFVFAVVIYFQGF). The Cytoplasmic portion of the chain corresponds to 262–288 (RVDLPIKSARYRGQYNTYPIKLFYTSN). A helical membrane pass occupies residues 289-309 (IPIILQSALVSNLYVISQMLS). Over 310–354 (TRFSGNFLVNLLGTWSDATTSGPARAYPVAGLCYYLSPPESFGSV) the chain is Lumenal. A helical membrane pass occupies residues 355–375 (LDDPVHAVIYIVFMLGSCAFF). Residues 376–420 (SKTWIEVSGSSAKDVAKQLKEQQMVMRGHRETSMVHELNRYIPTA) are Cytoplasmic-facing. Residues 421–441 (AAFGGLCIGGLSVMADFLGAI) form a helical membrane-spanning segment. At 442 to 445 (GSGT) the chain is on the lumenal side. A helical membrane pass occupies residues 446–462 (GILLAVTIIYQYFEIFV). The Cytoplasmic segment spans residues 463–476 (KEQSEVGSMGALLF).

The protein belongs to the SecY/SEC61-alpha family. The SEC61 channel-forming translocon complex consists of channel-forming core components SEC61A1, SEC61B and SEC61G and different auxiliary components such as SEC62 and SEC63. The SEC61 channel associates with the multi-pass translocon (MPT) complex.

The protein localises to the endoplasmic reticulum membrane. Its function is as follows. Component of SEC61 channel-forming translocon complex that mediates transport of signal peptide-containing precursor polypeptides across the endoplasmic reticulum (ER). Forms a ribosome receptor and a gated pore in the ER membrane, both functions required for cotranslational translocation of nascent polypeptides. May cooperate with auxiliary protein SEC62, SEC63 and HSPA5/BiP to enable post-translational transport of small presecretory proteins. The SEC61 channel is also involved in ER membrane insertion of transmembrane proteins: it mediates membrane insertion of the first few transmembrane segments of proteins, while insertion of subsequent transmembrane regions of multi-pass membrane proteins is mediated by the multi-pass translocon (MPT) complex. This chain is Protein transport protein Sec61 subunit alpha (sec61a), found in Bovichtus variegatus (Thornfish).